Here is a 520-residue protein sequence, read N- to C-terminus: Maturase K (520 aa).

Belongs to the intron maturase 2 family. MatK subfamily.

It localises to the plastid. Its subcellular location is the chloroplast. In terms of biological role, usually encoded in the trnK tRNA gene intron. Probably assists in splicing its own and other chloroplast group II introns. In Liriope muscari (Big blue lilyturf), this protein is Maturase K.